The primary structure comprises 156 residues: Large ribosomal subunit protein uL22 (156 aa).

The protein belongs to the universal ribosomal protein uL22 family. As to quaternary structure, part of the 50S ribosomal subunit.

Its function is as follows. This protein binds specifically to 23S rRNA. It makes multiple contacts with different domains of the 23S rRNA in the assembled 50S subunit and ribosome. The globular domain of the protein is located near the polypeptide exit tunnel on the outside of the subunit, while an extended beta-hairpin is found that lines the wall of the exit tunnel in the center of the 70S ribosome. The protein is Large ribosomal subunit protein uL22 of Hyperthermus butylicus (strain DSM 5456 / JCM 9403 / PLM1-5).